Here is a 293-residue protein sequence, read N- to C-terminus: Probable porphobilinogen deaminase (293 aa).

C233 is subject to S-(dipyrrolylmethanemethyl)cysteine.

This sequence belongs to the HMBS family. The cofactor is dipyrromethane.

The enzyme catalyses 4 porphobilinogen + H2O = hydroxymethylbilane + 4 NH4(+). The protein operates within porphyrin-containing compound metabolism; protoporphyrin-IX biosynthesis; coproporphyrinogen-III from 5-aminolevulinate: step 2/4. Functionally, tetrapolymerization of the monopyrrole PBG into the hydroxymethylbilane pre-uroporphyrinogen in several discrete steps. The polypeptide is Probable porphobilinogen deaminase (Saccharolobus islandicus (strain Y.N.15.51 / Yellowstone #2) (Sulfolobus islandicus)).